A 376-amino-acid polypeptide reads, in one-letter code: Fibromodulin (376 aa).

An N-terminal signal peptide occupies residues Met1 to Gly18. Gln19 is subject to Pyrrolidone carboxylic acid. Sulfotyrosine occurs at positions 20, 38, 53, 55, 63, and 65. One can recognise an LRRNT domain in the interval Ala67 to Ser105. 8 LRR repeats span residues Arg106 to Asn127, Gly130 to Ser143, His156 to Arg176, Ser177 to Gly198, Asn201 to Leu222, Ser224 to Ala245, Leu246 to Gly266, and Lys269 to Thr289. N-linked (GlcNAc...) (keratan sulfate) asparagine glycosylation is present at Asn127. Residue Asn166 is glycosylated (N-linked (GlcNAc...) (keratan sulfate) asparagine). Residue Asn201 is glycosylated (N-linked (GlcNAc...) (keratan sulfate) asparagine). The N-linked (GlcNAc...) (keratan sulfate) asparagine glycan is linked to Asn291. LRR repeat units follow at residues Ser294–Leu315 and Glu316–Thr335. Cys334 and Cys367 are oxidised to a cystine. N-linked (GlcNAc...) asparagine glycosylation occurs at Asn341. Residues Lys344 to Cys367 form an LRR 11 repeat.

This sequence belongs to the small leucine-rich proteoglycan (SLRP) family. SLRP class II subfamily. In terms of assembly, binds to type I and type II collagen. Post-translationally, binds keratan sulfate chains.

Its subcellular location is the secreted. It is found in the extracellular space. The protein localises to the extracellular matrix. Affects the rate of fibrils formation. May have a primary role in collagen fibrillogenesis. This chain is Fibromodulin (Fmod), found in Rattus norvegicus (Rat).